We begin with the raw amino-acid sequence, 377 residues long: MLDYLNIRRDLHQIPEIGLEEYKTHAYLMQVIDGLTAGLDFVEIRTWRTGILVFIKGSSPDKTIGWRTDIDGLPIVEDTGLDFASTHEGRMHACGHDMHMTVALGLLEQAVSTQPTHNLLFLFQPAEENEAGGMLMYEDGAFGDWLPDEFYGLHVRPDLKVGDIATNRGTLFAGTCEVKLTFKGKGGHAAFPHEANDALVAASYFITQVQTIVSRNVDPIEGAVVTFGSLHAGTTNNVIAETAFLHGTIRTLTQEMNLLTQKRLREIAEGLAQSFGLELDLELKQGGYLPVENHPDLADELMDFFQKEEGVQLIDIEPAMTGEDFGYLLSKVKGVMFWLGVDSPYALHHPKMTPDEAALPFAIEKIGKFLDYKINER.

Asp-69 is an active-site residue. Glu-128 functions as the Proton acceptor in the catalytic mechanism.

It belongs to the peptidase M20A family. N-acetyldiaminopimelate deacetylase subfamily.

It catalyses the reaction N-acetyl-(2S,6S)-2,6-diaminopimelate + H2O = (2S,6S)-2,6-diaminopimelate + acetate. Its pathway is amino-acid biosynthesis; L-lysine biosynthesis via DAP pathway; LL-2,6-diaminopimelate from (S)-tetrahydrodipicolinate (acetylase route): step 3/3. Catalyzes the conversion of N-acetyl-diaminopimelate to diaminopimelate and acetate. This chain is N-acetyldiaminopimelate deacetylase, found in Streptococcus sanguinis (strain SK36).